Here is a 435-residue protein sequence, read N- to C-terminus: GTPase Der (435 aa).

2 consecutive EngA-type G domains span residues 4 to 167 and 175 to 350; these read PVVA…PAEK and ISFS…DNQN. Residues 10–17, 57–61, 119–122, 181–188, 228–232, and 293–296 each bind GTP; these read GQPNVGKS, DTGGI, NKAD, GRPNVGKS, DTAGI, and NKWD. One can recognise a KH-like domain in the interval 351-435; the sequence is QRIQSSVLND…PIKILPRKRK (85 aa).

This sequence belongs to the TRAFAC class TrmE-Era-EngA-EngB-Septin-like GTPase superfamily. EngA (Der) GTPase family. As to quaternary structure, associates with the 50S ribosomal subunit.

In terms of biological role, GTPase that plays an essential role in the late steps of ribosome biogenesis. In Lactobacillus helveticus (strain DPC 4571), this protein is GTPase Der.